The primary structure comprises 678 residues: uncharacterized protein (678 aa).

Disordered stretches follow at residues threonine 123–valine 156 and threonine 381–serine 417.

The protein resides in the cytoplasm. This is an uncharacterized protein from Schizosaccharomyces pombe (strain 972 / ATCC 24843) (Fission yeast).